The chain runs to 465 residues: D-ornithine/D-lysine decarboxylase (465 aa).

N6-(pyridoxal phosphate)lysine is present on Lys-80. Residues Gly-259 and 307 to 310 (EPGR) contribute to the pyridoxal 5'-phosphate site. The active-site Proton donor is the Cys-387. Pyridoxal 5'-phosphate is bound at residue Tyr-422.

The protein belongs to the Orn/Lys/Arg decarboxylase class-II family. In terms of assembly, homodimer. Pyridoxal 5'-phosphate is required as a cofactor.

It carries out the reaction D-ornithine + H(+) = putrescine + CO2. The enzyme catalyses D-lysine + H(+) = cadaverine + CO2. Functionally, catalyzes the decarboxylation of D-ornithine and D-lysine. Ornithine is likely the physiological substrate. Has no detectable diaminopimelate decarboxylase activity in vitro. This Salmonella typhimurium (strain LT2 / SGSC1412 / ATCC 700720) protein is D-ornithine/D-lysine decarboxylase.